A 37-amino-acid chain; its full sequence is Large ribosomal subunit protein bL36 (37 aa).

Belongs to the bacterial ribosomal protein bL36 family.

The chain is Large ribosomal subunit protein bL36 from Staphylococcus epidermidis (strain ATCC 35984 / DSM 28319 / BCRC 17069 / CCUG 31568 / BM 3577 / RP62A).